Consider the following 307-residue polypeptide: Serine/threonine-protein phosphatase PP2A-3 catalytic subunit (307 aa).

Mn(2+) contacts are provided by Asp55, His57, Asp83, and Asn115. Residue His116 is the Proton donor of the active site. Mn(2+) is bound by residues His165 and His239.

Belongs to the PPP phosphatase family. PP-2A subfamily. It depends on Mn(2+) as a cofactor.

Its subcellular location is the cytoplasm. It carries out the reaction O-phospho-L-seryl-[protein] + H2O = L-seryl-[protein] + phosphate. The catalysed reaction is O-phospho-L-threonyl-[protein] + H2O = L-threonyl-[protein] + phosphate. In Oryza sativa subsp. indica (Rice), this protein is Serine/threonine-protein phosphatase PP2A-3 catalytic subunit (PP2A3).